A 150-amino-acid chain; its full sequence is FAD synthase (150 aa).

Residues 11–12, 16–19, Asp-96, and Tyr-124 each bind ATP; these read TF and HPGH.

The protein belongs to the archaeal FAD synthase family. In terms of assembly, homodimer. It depends on a divalent metal cation as a cofactor.

The enzyme catalyses FMN + ATP + H(+) = FAD + diphosphate. Its pathway is cofactor biosynthesis; FAD biosynthesis; FAD from FMN: step 1/1. Its function is as follows. Catalyzes the transfer of the AMP portion of ATP to flavin mononucleotide (FMN) to produce flavin adenine dinucleotide (FAD) coenzyme. The polypeptide is FAD synthase (Methanocaldococcus fervens (strain DSM 4213 / JCM 15782 / AG86) (Methanococcus fervens)).